Here is a 152-residue protein sequence, read N- to C-terminus: Melatonin receptor type 1B (152 aa).

The Cytoplasmic portion of the chain corresponds to 1–12 (HSFVYEKLFSLW). A helical membrane pass occupies residues 13–33 (NTILYVCLIWTLTVVATVPNF). The Extracellular segment spans residues 34–57 (FVGSLEYDPRIYSCTFVQTVSSSY). Residues 58 to 78 (TITVVVIHFILPITVVTFCYL) form a helical membrane-spanning segment. Residues 79–110 (RIWILVIQVRRKVKSEFKPRMKQSDFRNFLTM) lie on the Cytoplasmic side of the membrane. The helical transmembrane segment at 111 to 131 (FVVFVIFAFCWAPLNFIGLAV) threads the bilayer. Topologically, residues 132–144 (SINPTEVAPKIPE) are extracellular. A helical membrane pass occupies residues 145–152 (WLFVVSYF).

The protein belongs to the G-protein coupled receptor 1 family.

It localises to the cell membrane. Its function is as follows. High affinity receptor for melatonin. The activity of this receptor is mediated by pertussis toxin sensitive G proteins that inhibits adenylate cyclase activity. This chain is Melatonin receptor type 1B (mtnr1b), found in Xenopus laevis (African clawed frog).